We begin with the raw amino-acid sequence, 345 residues long: NADH-ubiquinone oxidoreductase chain 2 (345 aa).

A run of 9 helical transmembrane segments spans residues 1–21 (MNPI…VLTM), 60–80 (FLIQ…NAHL), 110–130 (PIHF…ALII), 149–169 (IPTP…GLGG), 179–196 (MAFS…IITI), 200–222 (LTLF…MHLT), 240–260 (TANL…LSGF), 274–294 (NLVP…MFYL), and 323–343 (TTML…TPTM).

It belongs to the complex I subunit 2 family.

It localises to the mitochondrion inner membrane. The catalysed reaction is a ubiquinone + NADH + 5 H(+)(in) = a ubiquinol + NAD(+) + 4 H(+)(out). In terms of biological role, core subunit of the mitochondrial membrane respiratory chain NADH dehydrogenase (Complex I) that is believed to belong to the minimal assembly required for catalysis. Complex I functions in the transfer of electrons from NADH to the respiratory chain. The immediate electron acceptor for the enzyme is believed to be ubiquinone. The chain is NADH-ubiquinone oxidoreductase chain 2 (MT-ND2) from Varanus melinus (Quince monitor lizard).